The chain runs to 470 residues: 5-hydroxytryptamine receptor 2A (470 aa).

Topologically, residues 1 to 80 are extracellular; the sequence is MDILCEENTS…LQEKNWSALL (80 aa). Residue N38 is glycosylated (N-linked (GlcNAc...) asparagine). The chain crosses the membrane as a helical span at residues 81–97; it reads TAVVIILTIAGNILVIM. Over 98 to 111 the chain is Cytoplasmic; sequence AVSLEKKLQNATNY. A helical transmembrane segment spans residues 112–137; the sequence is FLMSLAIADMLLGFLVMPVSTLTILY. Over 138–146 the chain is Extracellular; it reads GYRWPLPSK. Residues 147-171 form a helical membrane-spanning segment; sequence LCAVWIYLDVLFSTASIMHLCAISL. C148 and C227 are joined by a disulfide. D155 provides a ligand contact to serotonin. The DRY motif; important for ligand-induced conformation changes signature appears at 172 to 174; it reads DRY. Residues 172 to 191 are Cytoplasmic-facing; sequence DRYVAIQNPIHHSRFNSRTK. The helical transmembrane segment at 192-215 threads the bilayer; it reads AFLKIIAVWTISVGISMPIPVFGL. At 216-232 the chain is on the extracellular side; it reads QDDSKVFKEGSCLLADE. The chain crosses the membrane as a helical span at residues 233–258; that stretch reads NFVLIGSFVAFFIPLTIMVITYFLTI. Residues 259–321 lie on the Cytoplasmic side of the membrane; the sequence is KSLQKEATLC…QSISNEQKAC (63 aa). S280 is modified (phosphoserine). Residues 322–347 traverse the membrane as a helical segment; it reads KVLGIVFFLFVVMWCPFFITNIMAVI. N342 contributes to the serotonin binding site. A disulfide bridge links C348 with C352. The Extracellular portion of the chain corresponds to 348–355; the sequence is CKESCNRD. The helical transmembrane segment at 356–381 threads the bilayer; that stretch reads VIEALLNVFVWIGYLSSAVNPLVYTL. The short motif at 375–379 is the NPxxY motif; important for ligand-induced conformation changes and signaling element; that stretch reads NPLVY. Residues 382–470 lie on the Cytoplasmic side of the membrane; the sequence is FNKTYRSAFS…NTVNEKVSCV (89 aa). The segment at 424–470 is disordered; sequence QMGPKKNSKKDDKTTDNDCTMVALGKEHPEDAPADSSNTVNEKVSCV. Polar residues predominate over residues 458–470; sequence DSSNTVNEKVSCV. The short motif at 468-470 is the PDZ-binding element; it reads SCV.

This sequence belongs to the G-protein coupled receptor 1 family. In terms of assembly, interacts (via C-terminus) with MPDZ and PATJ. May interact (via C-terminus) with MPP3, PRDX6, DLG4, DLG1, CASK, APBA1 and MAGI2. Interacts with GRM2 and DRD2; this may affect signaling.

It localises to the cell membrane. It is found in the cell projection. Its subcellular location is the dendrite. The protein localises to the axon. The protein resides in the cytoplasmic vesicle. It localises to the membrane. It is found in the caveola. Its subcellular location is the presynapse. With respect to regulation, G-protein coupled receptor activity is regulated by lipids: oleamide increases HTR2A-mediated activity. In terms of biological role, G-protein coupled receptor for 5-hydroxytryptamine (serotonin). Also functions as a receptor for various drugs and psychoactive substances, including mescaline, psilocybin, 1-(2,5-dimethoxy-4-iodophenyl)-2-aminopropane (DOI) and lysergic acid diethylamide (LSD). Ligand binding causes a conformation change that triggers signaling via guanine nucleotide-binding proteins (G proteins) and modulates the activity of downstream effectors. HTR2A is coupled to G(q)/G(11) G alpha proteins and activates phospholipase C-beta, releasing diacylglycerol (DAG) and inositol 1,4,5-trisphosphate (IP3) second messengers that modulate the activity of phosphatidylinositol 3-kinase and promote the release of Ca(2+) ions from intracellular stores, respectively. Beta-arrestin family members inhibit signaling via G proteins and mediate activation of alternative signaling pathways. Affects neural activity, perception, cognition and mood. Plays a role in the regulation of behavior, including responses to anxiogenic situations and psychoactive substances. Plays a role in intestinal smooth muscle contraction, and may play a role in arterial vasoconstriction. In Bos taurus (Bovine), this protein is 5-hydroxytryptamine receptor 2A (HTR2A).